The primary structure comprises 599 residues: Dehydrogenase eriK (599 aa).

The first 20 residues, Met-1–Ala-20, serve as a signal peptide directing secretion. FAD contacts are provided by residues Thr-43–Ala-44 and Glu-64–Gly-65. Residue Asn-93 is glycosylated (N-linked (GlcNAc...) asparagine). Asn-122–Tyr-125 is an FAD binding site. N-linked (GlcNAc...) asparagine glycans are attached at residues Asn-169, Asn-191, Asn-234, Asn-260, Asn-284, Asn-319, Asn-339, Asn-353, Asn-365, Asn-370, Asn-398, Asn-456, and Asn-518. FAD contacts are provided by residues Ala-569 and Thr-580–Gln-581.

Belongs to the GMC oxidoreductase family. Homodimer. FAD is required as a cofactor.

Dehydrogenase; part of the gene cluster that mediates the biosynthesis of erinacines, cyathane-xylosides that show unique biological activities, including leishmanicidal activity, stimulating activity for nerve growth-factor synthesis, and agonistic activity toward the kappa opioid receptor. The role of the dehydrogenase eriK within the pathway has still to be determined. The first step of the erinacines biosynthesis pathway is catalyzed by the geranylgeranyl diphosphate (GGPP) synthase eriE via conversion of farnesyl pyrophosphate and isopentyl pyrophosphate into geranylgeranyl pyrophosphate (GGPP). GGPP is then substrate of the diterpene cyclase eriG for the production of cyatha-3,12-diene. The cytochrome P450 monooxygenase eriI then hydroxylates cyatha-3,12-diene at C-14 of the seven-membered ring to produce erinacol, which is further hydroxylated at C-15 by the cytochrome P450 monooxygenase eriC to yield cyathadiol. The cytochrome P450 monooxygenase eriA then catalyzes C-11 hydroxylation in the presence of the short chain dehydrogenase/reductase (SDR) eriH, which leads to the production of cyathatriol. The acetyltransferase eriL converts cyathatriol into 11-O-acetyl-cyathatriol. The SDR eriH catalyzes further oxidation of 11-O-acetyl-cyathatriol into 1-O-acetylcyathin A3. Finally, the glycosyl transferase eriJ tranfers xylose from UDP-xylose onto C-14 of 11-O-acetyl-cyathatriol to form eracine Q. EriJ is also able to convert 11-O-acetyl-cyathatriol to eracine Q2 by using UDP-D-glucose as cosubstrate, but at a lower rate. The polypeptide is Dehydrogenase eriK (Hericium erinaceus (Lion's mane mushroom)).